The primary structure comprises 461 residues: Dihydrofolate reductase (461 aa).

In terms of domain architecture, DHFR spans 233–447 (DLTMIVAVSS…VEIEFELYGK (215 aa)). Residues Ala239 and 246 to 252 (GIGKKNS) each bind NADP(+). 260 to 265 (EMAYFA) is a binding site for substrate. 292–294 (RSC) contributes to the NADP(+) binding site. Arg308 is a binding site for substrate. NADP(+) is bound by residues 314 to 316 (TRN) and 365 to 372 (GGSFLYGS).

It belongs to the dihydrofolate reductase family.

The enzyme catalyses (6S)-5,6,7,8-tetrahydrofolate + NADP(+) = 7,8-dihydrofolate + NADPH + H(+). It functions in the pathway cofactor biosynthesis; tetrahydrofolate biosynthesis; 5,6,7,8-tetrahydrofolate from 7,8-dihydrofolate: step 1/1. Functionally, key enzyme in folate metabolism. Catalyzes an essential reaction for de novo glycine and purine synthesis, and for DNA precursor synthesis. The sequence is that of Dihydrofolate reductase (dfr1) from Schizosaccharomyces pombe (strain 972 / ATCC 24843) (Fission yeast).